The primary structure comprises 95 residues: Aspartyl/glutamyl-tRNA(Asn/Gln) amidotransferase subunit C (95 aa).

The protein belongs to the GatC family. In terms of assembly, heterotrimer of A, B and C subunits.

It catalyses the reaction L-glutamyl-tRNA(Gln) + L-glutamine + ATP + H2O = L-glutaminyl-tRNA(Gln) + L-glutamate + ADP + phosphate + H(+). The catalysed reaction is L-aspartyl-tRNA(Asn) + L-glutamine + ATP + H2O = L-asparaginyl-tRNA(Asn) + L-glutamate + ADP + phosphate + 2 H(+). Allows the formation of correctly charged Asn-tRNA(Asn) or Gln-tRNA(Gln) through the transamidation of misacylated Asp-tRNA(Asn) or Glu-tRNA(Gln) in organisms which lack either or both of asparaginyl-tRNA or glutaminyl-tRNA synthetases. The reaction takes place in the presence of glutamine and ATP through an activated phospho-Asp-tRNA(Asn) or phospho-Glu-tRNA(Gln). This is Aspartyl/glutamyl-tRNA(Asn/Gln) amidotransferase subunit C from Clostridium botulinum (strain Loch Maree / Type A3).